A 114-amino-acid polypeptide reads, in one-letter code: SCP2 domain-containing protein YusD (114 aa).

In terms of domain architecture, SCP2 spans 21–101 (NASTLLITFQ…RALLKLEAIL (81 aa)).

The sequence is that of SCP2 domain-containing protein YusD (yusD) from Bacillus subtilis (strain 168).